We begin with the raw amino-acid sequence, 174 residues long: Shikimate kinase 2 (174 aa).

Residue 12–17 (GAGKTT) participates in ATP binding. 2 residues coordinate Mg(2+): T16 and D32. Residues D34, R58, and G79 each contribute to the substrate site. The segment at 112–126 (EEYPQDTQRPTLTGR) is LID domain. Position 120 (R120) interacts with ATP. Residue R139 coordinates substrate.

Belongs to the shikimate kinase family. AroL subfamily. In terms of assembly, monomer. The cofactor is Mg(2+).

Its subcellular location is the cytoplasm. The enzyme catalyses shikimate + ATP = 3-phosphoshikimate + ADP + H(+). It participates in metabolic intermediate biosynthesis; chorismate biosynthesis; chorismate from D-erythrose 4-phosphate and phosphoenolpyruvate: step 5/7. Functionally, catalyzes the specific phosphorylation of the 3-hydroxyl group of shikimic acid using ATP as a cosubstrate. The polypeptide is Shikimate kinase 2 (Serratia proteamaculans (strain 568)).